The sequence spans 230 residues: Putative N-acetylmannosamine-6-phosphate 2-epimerase (230 aa).

It belongs to the NanE family.

It catalyses the reaction an N-acyl-D-glucosamine 6-phosphate = an N-acyl-D-mannosamine 6-phosphate. The protein operates within amino-sugar metabolism; N-acetylneuraminate degradation; D-fructose 6-phosphate from N-acetylneuraminate: step 3/5. Functionally, converts N-acetylmannosamine-6-phosphate (ManNAc-6-P) to N-acetylglucosamine-6-phosphate (GlcNAc-6-P). This chain is Putative N-acetylmannosamine-6-phosphate 2-epimerase, found in Malacoplasma penetrans (strain HF-2) (Mycoplasma penetrans).